A 432-amino-acid chain; its full sequence is Adenylosuccinate synthetase (432 aa).

Residues 13-19 (GDEGKGK) and 41-43 (GHT) each bind GTP. The Proton acceptor role is filled by D14. Residues D14 and G41 each contribute to the Mg(2+) site. IMP-binding positions include 14-17 (DEGK), 39-42 (NAGH), T130, R144, Q225, T240, and R306. H42 serves as the catalytic Proton donor. 302–308 (TVTGRAR) is a substrate binding site. Residues R308, 334–336 (KLD), and 416–418 (STG) contribute to the GTP site.

It belongs to the adenylosuccinate synthetase family. As to quaternary structure, homodimer. Requires Mg(2+) as cofactor.

The protein localises to the cytoplasm. The catalysed reaction is IMP + L-aspartate + GTP = N(6)-(1,2-dicarboxyethyl)-AMP + GDP + phosphate + 2 H(+). It participates in purine metabolism; AMP biosynthesis via de novo pathway; AMP from IMP: step 1/2. Functionally, plays an important role in the de novo pathway of purine nucleotide biosynthesis. Catalyzes the first committed step in the biosynthesis of AMP from IMP. This Herminiimonas arsenicoxydans protein is Adenylosuccinate synthetase.